The following is a 298-amino-acid chain: tRNA pseudouridine synthase B (298 aa).

Aspartate 46 serves as the catalytic Nucleophile.

Belongs to the pseudouridine synthase TruB family. Type 1 subfamily.

The catalysed reaction is uridine(55) in tRNA = pseudouridine(55) in tRNA. Functionally, responsible for synthesis of pseudouridine from uracil-55 in the psi GC loop of transfer RNAs. This is tRNA pseudouridine synthase B from Paracoccus denitrificans (strain Pd 1222).